A 270-amino-acid polypeptide reads, in one-letter code: Homeobox protein pal-1 (270 aa).

Disordered stretches follow at residues 1–24, 96–130, and 175–201; these read MSVD…TTVP, VKPP…SGAA, and LGNN…TNNV. 2 stretches are compositionally biased toward low complexity: residues 14–24 and 101–130; these read SSSTPSPTTVP and SNGS…SGAA. Residues 206 to 265 constitute a DNA-binding region (homeobox); the sequence is ADKYRMVYSDYQRLELEKEFHTSPFITSDRKSQLSTMLSLTERQIKIWFQNRRAKDRRDK.

Belongs to the Caudal homeobox family. As to quaternary structure, interacts with tir-1 and let-756. In terms of tissue distribution, blastomeres. Embryo. Oocytes.

The protein resides in the nucleus. Its subcellular location is the chromosome. The protein localises to the centromere. It is found in the kinetochore. Functionally, transcriptional activator. Interacts with promoter regions for tbx-8.9, tbx-9, elt-1, hnd-1, scrt-1, and vab-7 genes. Binds the sequence ATTTATGAC. Binds to the enhancer region of the hlh-1 gene promoter during embryonic body wall muscle development. Activates the gene for mab-5 in embryo development. Necessary for vab-7 expression in C blastomeres in the posterior of embryos. Required for posterior V6 neuroectoblast cell fate specification during postembryonic neurogenesis (patterning) which generates the characteristic ray lineage during male tail development. Binds to ced-3 promoter and activated expression which is crucial for tail-spike cell death. Has a role in E cell specification in endoderm development and body wall muscle development. This chain is Homeobox protein pal-1 (pal-1), found in Caenorhabditis elegans.